A 109-amino-acid polypeptide reads, in one-letter code: MPLYEFTFIAQQGLTQYELEGLVKGLSSLLTKNGAELLKYEYWGLLDFAYAIDKMNKGHYCMMYIRSSSTSMDEFKRKVRLNEDVLRFLCLKRDKLPEGDSLMVQASQA.

This sequence belongs to the bacterial ribosomal protein bS6 family.

Its function is as follows. Binds together with bS18 to 16S ribosomal RNA. The protein is Small ribosomal subunit protein bS6 of Ehrlichia ruminantium (strain Gardel).